Reading from the N-terminus, the 390-residue chain is Ketoisovalerate reductase BEA2 (390 aa).

70–75 (GPGNIG) provides a ligand contact to NADP(+). The active-site Proton donor is K285. Residues N289 and N293 each contribute to the substrate site.

Belongs to the ketopantoate reductase family.

It catalyses the reaction (R)-2-hydroxy-3-methylbutanoate + NADP(+) = 3-methyl-2-oxobutanoate + NADPH + H(+). Its activity is regulated as follows. The reductase activity is increased by Mg(2+) (195%), Ca(2+) (169%) and slightly increased by K(+) (123%). The reduction activity is inhibited by Fe(2+) and Co(2+), and almost totally inhibited by Cu(2+), Mn(2+), Zn(2+) and Fe(3+) (from 3% to 9% residual activity respectively). The chelating agent EDTA had little effect, suggesting Mg(2+) and Ca(2+) are not determining factors, though they could promote the reductase enzyme activity. Functionally, ketoisovalerate reductase; part of the gene cluster that mediates the biosynthesis of beauvericin (BEA), a non-ribosomal cyclic hexadepsipeptide that shows antibiotic, antifungal, insecticidal, and cancer cell antiproliferative and antihaptotactic activity. Ketoisovalerate reductase BEA2 catalyzes the NADPH-specific reduction of ketoisovaleric acid to hydroxyisovalerate, a precursor for beauvericin biosynthesis. The nonribosomal cyclodepsipeptide synthetase BEA1 then catalyzes the formation of beauvericin via condensation and cyclization of 3 dipeptidol monomers, each composed of one unit of hydroxyisovalerate and one unit of N-methyl-phenylalanine. This is Ketoisovalerate reductase BEA2 from Gibberella intermedia (Bulb rot disease fungus).